The following is a 286-amino-acid chain: PTS system mannose-specific EIID component (286 aa).

Position 1 is an N-formylmethionine (Met-1). Over 1 to 17 (MSEMVDTTQTTTEKKLT) the chain is Cytoplasmic. The PTS EIID domain maps to 14-284 (KKLTQSDIRG…GIAGYACGLL (271 aa)). An intramembrane segment occupies 18 to 55 (QSDIRGVFLRSNLFQGSWNFERMQALGFCFSMVPAIRR). Residues 56–62 (LYPENNE) are Cytoplasmic-facing. An intramembrane segment occupies 63–95 (ARKQAIRRHLEFFNTQPFVAAPILGVTLALEEQ). At 96–103 (RANGAEID) the chain is on the cytoplasmic side. A transmembrane helix spans residues 104–143 (DGAINGIKVGLMGPLAGVGDPIFWGTVRPVFAALGAGIAM). Residues 144 to 147 (SGSL) lie on the Periplasmic side of the membrane. The hydrophobic stretch at 148 to 176 (LGPLLFFILFNLVRLATRYYGVAYGYSKG) threads the membrane. The Cytoplasmic portion of the chain corresponds to 177-186 (IDIVKDMGGG). Positions 187 to 212 (FLQKLTEGASILGLFVMGALVNKWTH) form a transmembrane segment. At 213 to 244 (VNIPLVVSRITDQTGKEHVTTVQTILDQLMPG) the chain is on the periplasmic side. Positions 245–258 (LVPLLLTFACMWLL) form a transmembrane segment. Topologically, residues 259 to 264 (RKKVNP) are cytoplasmic. A transmembrane helix spans residues 265 to 283 (LWIIVGFFVIGIAGYACGL). Residues 284-286 (LGL) are Periplasmic-facing.

As to quaternary structure, homotrimer of protomers that are composed of two subunits, IIC and IID.

It is found in the cell inner membrane. In terms of biological role, the phosphoenolpyruvate-dependent sugar phosphotransferase system (sugar PTS), a major carbohydrate active transport system, catalyzes the phosphorylation of incoming sugar substrates concomitantly with their translocation across the cell membrane. The enzyme II ManXYZ PTS system is involved in mannose transport. In Escherichia coli O6:H1 (strain CFT073 / ATCC 700928 / UPEC), this protein is PTS system mannose-specific EIID component (manZ).